A 351-amino-acid polypeptide reads, in one-letter code: Methylxanthine N1-demethylase NdmA (351 aa).

Positions 17–125 (WHPVCTVTEL…CEERYGLIWI (109 aa)) constitute a Rieske domain. Residues C62, H64, C81, and H84 each contribute to the [2Fe-2S] cluster site.

The cofactor is [2Fe-2S] cluster.

The catalysed reaction is caffeine + NADH + O2 + H(+) = theobromine + formaldehyde + NAD(+) + H2O. It catalyses the reaction caffeine + NADPH + O2 + H(+) = theobromine + formaldehyde + NADP(+) + H2O. It carries out the reaction theophylline + NADH + O2 + H(+) = 3-methylxanthine + formaldehyde + NAD(+) + H2O. The enzyme catalyses theophylline + NADPH + O2 + H(+) = 3-methylxanthine + formaldehyde + NADP(+) + H2O. The catalysed reaction is 1,7-dimethylxanthine + NADH + O2 + H(+) = 7-methylxanthine + formaldehyde + NAD(+) + H2O. It catalyses the reaction 1,7-dimethylxanthine + NADPH + O2 + H(+) = 7-methylxanthine + formaldehyde + NADP(+) + H2O. The protein operates within alkaloid degradation. Its function is as follows. Involved in the caffeine degradation, which is the essential first step for assimilating the carbon and nitrogen in caffeine. Catalyzes the N1-demethylation of caffeine to produce theobromine and formaldehyde. Also catalyzes the N1-demethylation of theophylline, paraxanthine, and 1-methylxanthine to 3-methylxanthine, 7-methylxanthine, and xanthine, respectively. NADH is the preferred substrate. This chain is Methylxanthine N1-demethylase NdmA (ndmA), found in Pseudomonas putida (Arthrobacter siderocapsulatus).